A 351-amino-acid chain; its full sequence is MSTPSSLQALVKKVLATQHISKEHYFILKYCGLWWHGAPIMLSTNENNQLMIKSAIFKDGLDLNLALMKAVQENNYDLIELFTEWGADITSSLITVNTEHTWNFCRELGAKILNEMDIVHIFYKIHRIKTSSNIILCHKLLSNKPLFQNIEGLKIIICCFLEKIPINFILNEITFNEMLTRYWYSMAIQYNLTEAIQYFYQRYSHFKDWRLICGLSFNNVSDLHDHIKKVDMNIDEMMYLACMRDSNFLTIFYCFVLGADINRAMVTAVKKFYTNNLFFCIDLGANAFEESLELAKQKNNDILAELLSFKDYYSSNASLLSLKTTDPEKINALLKNYKSKNIMRYKKLSRK.

The protein belongs to the asfivirus MGF 360 family.

Its function is as follows. Plays a role in virus cell tropism, and may be required for efficient virus replication in macrophages. This is Protein MGF 360-2L from African swine fever virus (isolate Tick/South Africa/Pretoriuskop Pr4/1996) (ASFV).